Consider the following 121-residue polypeptide: Large ribosomal subunit protein bL12 (121 aa).

The protein belongs to the bacterial ribosomal protein bL12 family. As to quaternary structure, homodimer. Part of the ribosomal stalk of the 50S ribosomal subunit. Forms a multimeric L10(L12)X complex, where L10 forms an elongated spine to which 2 to 4 L12 dimers bind in a sequential fashion. Binds GTP-bound translation factors.

Forms part of the ribosomal stalk which helps the ribosome interact with GTP-bound translation factors. Is thus essential for accurate translation. The chain is Large ribosomal subunit protein bL12 from Escherichia coli O81 (strain ED1a).